The primary structure comprises 247 residues: TLC domain-containing protein 1 (247 aa).

A signal peptide spans 1 to 35 (MPRLLHPALPLLLGATLTFRALRRALCRLPLPVHV). The Extracellular segment spans residues 36-46 (RADPLRTWRWH). The TLC domain occupies 40-234 (LRTWRWHNLL…LLRSDFCPEH (195 aa)). The helical transmembrane segment at 47–67 (NLLVSFAHSIVSGIWALLCVW) threads the bilayer. Residues 68 to 83 (QTPDMLVEIETAWSLS) lie on the Cytoplasmic side of the membrane. A helical transmembrane segment spans residues 84–104 (GYLLVCFSAGYFIHDTVDIVA). The Extracellular portion of the chain corresponds to 105–123 (SGQTRASWEYLVHHVMAMG). The segment at residues 124 to 144 (AFFSGIFWSSFVGGGVLTLLV) is an intramembrane region (helical). The Extracellular portion of the chain corresponds to 145–173 (EVSNIFLTIRMMMKISNAQDHLLYRVNKY). Residues 174–194 (VNLVMYFLFRLAPQAYLTHFF) form a helical membrane-spanning segment. Residues 195–201 (LRYVNQR) lie on the Cytoplasmic side of the membrane. The chain crosses the membrane as a helical span at residues 202–222 (TLGTFLLGILLMLDVMIIIYF). Over 223 to 247 (SRLLRSDFCPEHVPKKQHKDKFLTE) the chain is Extracellular.

It is found in the cell membrane. Functionally, regulates the composition and fluidity of the plasma membrane. Inhibits the incorporation of membrane-fluidizing phospholipids containing omega-3 long-chain polyunsaturated fatty acids (LCPUFA) and thereby promotes membrane rigidity. Does not appear to have any effect on LCPUFA synthesis. The polypeptide is TLC domain-containing protein 1 (TLCD1) (Homo sapiens (Human)).